The following is a 93-amino-acid chain: OMEGA-ectatommitoxin(02)-Rm1c (93 aa).

An N-terminal signal peptide occupies residues 1–30 (MKDSYISIVIAYLMVTFILVSSMPIEGEKG). 3 disulfides stabilise this stretch: Cys-39–Cys-52, Cys-47–Cys-68, and Cys-70–Cys-79. The region spanning 43–80 (YENYCFNGKCVHVVAQDEPGKPCYSCICDEFYIGERCG) is the EGF-like domain.

The protein belongs to the EGF domain peptide family. Expressed by the venom gland.

It localises to the secreted. Ant peptide with probable defensive activity which acts as a potent agonist of the mammalian epidermal growth factor receptor (EGFR). Mimics, both structurally and functionally, vertebrate epidermal growth factor (EGF) peptide hormones. In vivo, intraplantar injection in mice causes long-lasting (several days) hypersensitivity of the injected paw to both mechanical and thermal stimuli. Its long-lasting effect is unusual for venom toxins whose effects are usually immediate. One possible explanation is that it would reduce the duration of a nest attack, discourage future attacks, or enhance the actions of subsequent exposure to other pain-inducing venom peptides. The chain is OMEGA-ectatommitoxin(02)-Rm1c from Rhytidoponera metallica (Australian green-headed ant).